The chain runs to 451 residues: Phosphoglucosamine mutase (451 aa).

The active-site Phosphoserine intermediate is the Ser107. The Mg(2+) site is built by Ser107, Asp246, Asp248, and Asp250. Ser107 is subject to Phosphoserine.

Belongs to the phosphohexose mutase family. Mg(2+) is required as a cofactor. In terms of processing, activated by phosphorylation.

It catalyses the reaction alpha-D-glucosamine 1-phosphate = D-glucosamine 6-phosphate. Catalyzes the conversion of glucosamine-6-phosphate to glucosamine-1-phosphate. The chain is Phosphoglucosamine mutase from Burkholderia vietnamiensis (strain G4 / LMG 22486) (Burkholderia cepacia (strain R1808)).